The primary structure comprises 523 residues: 2-isopropylmalate synthase (523 aa).

The Pyruvate carboxyltransferase domain maps to 5–267 (VIIFDTTLRD…HTAINHQEIW (263 aa)). Residues aspartate 14, histidine 202, histidine 204, and asparagine 238 each coordinate Mn(2+). The interval 392–523 (RLDYFSVQSG…QHNENNKETV (132 aa)) is regulatory domain.

This sequence belongs to the alpha-IPM synthase/homocitrate synthase family. LeuA type 1 subfamily. As to quaternary structure, homodimer. Requires Mn(2+) as cofactor.

It is found in the cytoplasm. The catalysed reaction is 3-methyl-2-oxobutanoate + acetyl-CoA + H2O = (2S)-2-isopropylmalate + CoA + H(+). Its pathway is amino-acid biosynthesis; L-leucine biosynthesis; L-leucine from 3-methyl-2-oxobutanoate: step 1/4. Catalyzes the condensation of the acetyl group of acetyl-CoA with 3-methyl-2-oxobutanoate (2-ketoisovalerate) to form 3-carboxy-3-hydroxy-4-methylpentanoate (2-isopropylmalate). The sequence is that of 2-isopropylmalate synthase from Escherichia coli (strain SMS-3-5 / SECEC).